Reading from the N-terminus, the 263-residue chain is Troponin T, slow skeletal muscle (263 aa).

Residues 1 to 38 (MSDAEEQEYEEEQPEEEEAAEEEEEAPEEPEPAAEPEE) show a composition bias toward acidic residues. Disordered stretches follow at residues 1-64 (MSDA…RVDF) and 109-154 (AERA…KKKV). Ser2 is modified (phosphoserine; by CK2). Residues 44–56 (SRPVVPPLIPPKI) are compositionally biased toward pro residues. Residues 109-150 (AERAEQQRFRTEKERERQAKLAEEKMRKEEEEAKKRAEDDAK) are compositionally biased toward basic and acidic residues.

This sequence belongs to the troponin T family. Interacts with TPM3. In terms of tissue distribution, expressed dominantly in slow muscles, like masseter, diaphragm, psoas major and spinnalis. Isoform 2 is also expressed in fast muscles.

In terms of biological role, troponin T is the tropomyosin-binding subunit of troponin, the thin filament regulatory complex which confers calcium-sensitivity to striated muscle actomyosin ATPase activity. In Bos taurus (Bovine), this protein is Troponin T, slow skeletal muscle (TNNT1).